The sequence spans 114 residues: DNA-directed RNA polymerase subunit omega (114 aa).

Belongs to the RNA polymerase subunit omega family. As to quaternary structure, the RNAP catalytic core consists of 2 alpha, 1 beta, 1 beta' and 1 omega subunit. When a sigma factor is associated with the core the holoenzyme is formed, which can initiate transcription.

It carries out the reaction RNA(n) + a ribonucleoside 5'-triphosphate = RNA(n+1) + diphosphate. Promotes RNA polymerase assembly. Latches the N- and C-terminal regions of the beta' subunit thereby facilitating its interaction with the beta and alpha subunits. The polypeptide is DNA-directed RNA polymerase subunit omega (Erythrobacter litoralis (strain HTCC2594)).